The primary structure comprises 611 residues: MWTHPINYDVIVVGAGHAGCEAAFCSAKMGASVLILTSNLDTIAKLSCNPAVGGIGKGHIVREIDALGGIMAEVTDQSGIQFRILNQTKGPAVRAPRAQVDKQMYHIHMKRLLESTPGLHIMQGTVESLLDNENVIQGVTTKEGITYLGKTVILSSGTFMRGLIHIGDLNFPGGRLGDPAATGLSAALKERGFPISRLKTGTPPRLLASSIDFSVAEEQPGDPGVGFVHRDEPFVPPLPQVSCYITHTTQKTKDIIAANISRSALYGGRIEGIGPRYCPSIEDKIVKFADKERHHIFIEPEGIYTQEVYVNGLSTSMPFDVQYNMIRSVHGLENAIITRPAYAIEYDYVHGNVIYPTLESKIVEGLFLCGQINGTTGYEEAAAQGLIAGINAVNKVLKKPAFIPSRQESYIGVMLDDLTTQVLDEPYRMFTGRAEHRLLLRQDNACLRLSHYGRDLGLLSQERYEIFENQKQIIEDEKARLNKTFKKYGNSVVSLAKALCRPEVSYDILRETFPDDVRDLGSTLNASLEMEIKYAGYIDRQKSLIHSLSKSENMVIPEDIDYQSISSLSLEAREKLAKFTPRTIGSASRISGIACADIQVLMVAVKKHAHQ.

14–19 (GAGHAG) is a binding site for FAD. 274 to 288 (GPRYCPSIEDKIVKF) is an NAD(+) binding site.

It belongs to the MnmG family. Homodimer. Heterotetramer of two MnmE and two MnmG subunits. Requires FAD as cofactor.

It is found in the cytoplasm. Functionally, NAD-binding protein involved in the addition of a carboxymethylaminomethyl (cmnm) group at the wobble position (U34) of certain tRNAs, forming tRNA-cmnm(5)s(2)U34. This Chlamydia caviae (strain ATCC VR-813 / DSM 19441 / 03DC25 / GPIC) (Chlamydophila caviae) protein is tRNA uridine 5-carboxymethylaminomethyl modification enzyme MnmG.